The sequence spans 458 residues: Exodeoxyribonuclease 7 large subunit (458 aa).

Belongs to the XseA family. As to quaternary structure, heterooligomer composed of large and small subunits.

The protein resides in the cytoplasm. The catalysed reaction is Exonucleolytic cleavage in either 5'- to 3'- or 3'- to 5'-direction to yield nucleoside 5'-phosphates.. Functionally, bidirectionally degrades single-stranded DNA into large acid-insoluble oligonucleotides, which are then degraded further into small acid-soluble oligonucleotides. The sequence is that of Exodeoxyribonuclease 7 large subunit from Escherichia coli O6:H1 (strain CFT073 / ATCC 700928 / UPEC).